The following is a 127-amino-acid chain: Large-conductance mechanosensitive channel (127 aa).

The next 3 helical transmembrane spans lie at 9 to 29 (EFAM…GVAF), 32 to 52 (IVTA…LGGI), and 75 to 95 (VIDF…INLL).

The protein belongs to the MscL family. In terms of assembly, homopentamer.

The protein resides in the cell inner membrane. Channel that opens in response to stretch forces in the membrane lipid bilayer. May participate in the regulation of osmotic pressure changes within the cell. The chain is Large-conductance mechanosensitive channel from Legionella pneumophila subsp. pneumophila (strain Philadelphia 1 / ATCC 33152 / DSM 7513).